The primary structure comprises 61 residues: Large ribosomal subunit protein bL32 (61 aa).

The segment covering 1–16 (MAVPKRKTSPSKRGMR) has biased composition (basic residues). The disordered stretch occupies residues 1-61 (MAVPKRKTSP…RSVLTPKNSG (61 aa)). The span at 28–44 (VEDKDSGELRRPHHIDL) shows a compositional bias: basic and acidic residues.

This sequence belongs to the bacterial ribosomal protein bL32 family.

The protein is Large ribosomal subunit protein bL32 of Bartonella bacilliformis (strain ATCC 35685 / KC583 / Herrer 020/F12,63).